Here is a 245-residue protein sequence, read N- to C-terminus: MKVDLNADLGEGCANDQALLQLVSSANIACGFHAGDAQTMRQSVRWAIEYGVAIGAHPSFPDRENFGRTAMQLPPETVYAQVVYQLGALAAIVKAEGGIMQHVKPHGMLYNQAALDPLLADAIAQAVKAVDPILRLVGLAGSELIRAGERAGLVTRQEVFADRRYQSDGTLVPRSQPDALIESDDLALSQTLAMVQRHQVQARDGSWVPVQADTVCVHGDGAHALNFARRLRDSFQQENITVTAQ.

Belongs to the LamB/PxpA family. As to quaternary structure, forms a complex composed of PxpA, PxpB and PxpC.

The enzyme catalyses 5-oxo-L-proline + ATP + 2 H2O = L-glutamate + ADP + phosphate + H(+). Its function is as follows. Catalyzes the cleavage of 5-oxoproline to form L-glutamate coupled to the hydrolysis of ATP to ADP and inorganic phosphate. This Yersinia enterocolitica serotype O:8 / biotype 1B (strain NCTC 13174 / 8081) protein is 5-oxoprolinase subunit A.